Here is a 646-residue protein sequence, read N- to C-terminus: Epithelial sodium channel subunit beta-2 (646 aa).

Over 1–57 the chain is Cytoplasmic; it reads MIQGKLKRLKRYFTRALHRIQKGPGYTYKELLVWFCDNTNTHGPKRIIKEGPKKRVM. A helical membrane pass occupies residues 58–78; sequence WFILTLVFAGLVFWQWGLLIL. The Extracellular portion of the chain corresponds to 79–551; that stretch reads TYLSYGVSVS…GGQFGFWMGG (473 aa). 8 disulfide bridges follow: Cys-104–Cys-290, Cys-214–Cys-221, Cys-267–Cys-274, Cys-380–Cys-467, Cys-405–Cys-463, Cys-409–Cys-459, Cys-418–Cys-445, and Cys-420–Cys-434. The helical transmembrane segment at 552–572 threads the bilayer; sequence SVLCIIEFGEIIIDCMWITIL. Residues 573–646 are Cytoplasmic-facing; it reads KLLAWIRNRR…IEPVSSDEEN (74 aa). The interval 586-646 is disordered; that stretch reads QRPQYADPPP…IEPVSSDEEN (61 aa). Basic and acidic residues predominate over residues 610-619; it reads QHDDGNHVTE.

It belongs to the amiloride-sensitive sodium channel (TC 1.A.6) family. SCNN1B subfamily. Component of the heterotrimeric epithelial sodium channel (ENaC) composed of an alpha/SCNN1A, a beta/SCNN1B and a gamma/SCNN1G subunit.

Its subcellular location is the apical cell membrane. It is found in the cytoplasmic vesicle membrane. The enzyme catalyses Na(+)(in) = Na(+)(out). With respect to regulation, originally identified and characterized by its inhibition by the diuretic drug amiloride. Its function is as follows. This is one of the three pore-forming subunits of the heterotrimeric epithelial sodium channel (ENaC), a critical regulator of sodium balance and fluid homeostasis. ENaC operates in epithelial tissues, where it mediates the electrodiffusion of sodium ions from extracellular fluid through the apical membrane of cells, with water following osmotically. This Xenopus laevis (African clawed frog) protein is Epithelial sodium channel subunit beta-2 (scnn1b-b).